The primary structure comprises 1381 residues: DNA-directed RNA polymerase subunit beta'' (1381 aa).

Zn(2+) is bound by residues C224, C295, C302, and C305.

Belongs to the RNA polymerase beta' chain family. RpoC2 subfamily. As to quaternary structure, in plastids the minimal PEP RNA polymerase catalytic core is composed of four subunits: alpha, beta, beta', and beta''. When a (nuclear-encoded) sigma factor is associated with the core the holoenzyme is formed, which can initiate transcription. The cofactor is Zn(2+).

Its subcellular location is the plastid. It localises to the chloroplast. It carries out the reaction RNA(n) + a ribonucleoside 5'-triphosphate = RNA(n+1) + diphosphate. Functionally, DNA-dependent RNA polymerase catalyzes the transcription of DNA into RNA using the four ribonucleoside triphosphates as substrates. The chain is DNA-directed RNA polymerase subunit beta'' from Lactuca sativa (Garden lettuce).